Here is a 170-residue protein sequence, read N- to C-terminus: Ribosome maturation factor RimM (170 aa).

Residues 98–170 (PDEYYWVDLE…LIVVDWDPDF (73 aa)) enclose the PRC barrel domain.

The protein belongs to the RimM family. In terms of assembly, binds ribosomal protein uS19.

The protein localises to the cytoplasm. In terms of biological role, an accessory protein needed during the final step in the assembly of 30S ribosomal subunit, possibly for assembly of the head region. Essential for efficient processing of 16S rRNA. May be needed both before and after RbfA during the maturation of 16S rRNA. It has affinity for free ribosomal 30S subunits but not for 70S ribosomes. This chain is Ribosome maturation factor RimM, found in Xanthomonas oryzae pv. oryzae (strain MAFF 311018).